Here is a 261-residue protein sequence, read N- to C-terminus: Cytochrome c oxidase subunit 3 (261 aa).

Over 1–15 the chain is Mitochondrial matrix; that stretch reads MTHQTHAYHMVDPSP. The helical transmembrane segment at 16–34 threads the bilayer; that stretch reads WPLTGALSALLMTSGLTMW. The Mitochondrial intermembrane portion of the chain corresponds to 35–40; it reads FHYHSV. The chain crosses the membrane as a helical span at residues 41 to 66; that stretch reads VLLFLGLMTNTLTMFQWWRDVVREGT. The Mitochondrial matrix segment spans residues 67–72; the sequence is FQGHHT. Residues 73 to 105 traverse the membrane as a helical segment; it reads PVVQEGLRYGMILFITSEVLFFTGFFWAFYHSS. Over 106–128 the chain is Mitochondrial intermembrane; sequence LAPTPELGSYWPPVGVYPLNPLE. Residues 129–152 traverse the membrane as a helical segment; that stretch reads VPLLNTSVLLASGVTITWAHHSLM. Over 153–155 the chain is Mitochondrial matrix; it reads EGN. The chain crosses the membrane as a helical span at residues 156 to 183; sequence RKNMLQALLITILLGVYFTLLQMFEYYE. Residues 184–190 lie on the Mitochondrial intermembrane side of the membrane; that stretch reads ASFTISD. Residues 191 to 223 form a helical membrane-spanning segment; that stretch reads GIYGSTFFVTTGFHGLHVIIGSTFLLTCFIRQL. The Mitochondrial matrix segment spans residues 224–232; the sequence is KFHFTSNHH. A helical transmembrane segment spans residues 233–256; that stretch reads FGFEAAAWYWHFVDVVWLFLYLSI. The Mitochondrial intermembrane portion of the chain corresponds to 257-261; it reads YWWGS.

It belongs to the cytochrome c oxidase subunit 3 family. As to quaternary structure, component of the cytochrome c oxidase (complex IV, CIV), a multisubunit enzyme composed of 14 subunits. The complex is composed of a catalytic core of 3 subunits MT-CO1, MT-CO2 and MT-CO3, encoded in the mitochondrial DNA, and 11 supernumerary subunits COX4I, COX5A, COX5B, COX6A, COX6B, COX6C, COX7A, COX7B, COX7C, COX8 and NDUFA4, which are encoded in the nuclear genome. The complex exists as a monomer or a dimer and forms supercomplexes (SCs) in the inner mitochondrial membrane with NADH-ubiquinone oxidoreductase (complex I, CI) and ubiquinol-cytochrome c oxidoreductase (cytochrome b-c1 complex, complex III, CIII), resulting in different assemblies (supercomplex SCI(1)III(2)IV(1) and megacomplex MCI(2)III(2)IV(2)).

The protein resides in the mitochondrion inner membrane. It catalyses the reaction 4 Fe(II)-[cytochrome c] + O2 + 8 H(+)(in) = 4 Fe(III)-[cytochrome c] + 2 H2O + 4 H(+)(out). Component of the cytochrome c oxidase, the last enzyme in the mitochondrial electron transport chain which drives oxidative phosphorylation. The respiratory chain contains 3 multisubunit complexes succinate dehydrogenase (complex II, CII), ubiquinol-cytochrome c oxidoreductase (cytochrome b-c1 complex, complex III, CIII) and cytochrome c oxidase (complex IV, CIV), that cooperate to transfer electrons derived from NADH and succinate to molecular oxygen, creating an electrochemical gradient over the inner membrane that drives transmembrane transport and the ATP synthase. Cytochrome c oxidase is the component of the respiratory chain that catalyzes the reduction of oxygen to water. Electrons originating from reduced cytochrome c in the intermembrane space (IMS) are transferred via the dinuclear copper A center (CU(A)) of subunit 2 and heme A of subunit 1 to the active site in subunit 1, a binuclear center (BNC) formed by heme A3 and copper B (CU(B)). The BNC reduces molecular oxygen to 2 water molecules using 4 electrons from cytochrome c in the IMS and 4 protons from the mitochondrial matrix. In Mammuthus primigenius (Siberian woolly mammoth), this protein is Cytochrome c oxidase subunit 3 (MT-CO3).